A 161-amino-acid chain; its full sequence is Disulfide bond formation protein B (161 aa).

At 1-8 the chain is on the cytoplasmic side; it reads MQANSRAY. The chain crosses the membrane as a helical span at residues 9 to 25; it reads FLLIALVSFGLVGVALY. At 26-43 the chain is on the periplasmic side; sequence LQFEKGYQPCPLCVMQRF. Cys35 and Cys38 are joined by a disulfide. A helical transmembrane segment spans residues 44–58; sequence AFIGIGIFSLLAAVA. At 59–63 the chain is on the cytoplasmic side; it reads QNTRS. Residues 64-81 traverse the membrane as a helical segment; it reads LWQGLGMLSGIAGIAVAV. Topologically, residues 82 to 136 are periplasmic; the sequence is YHVSLLLNPKASCGIDPLENWVNALPTAKALPQVFYADGLCTAPLPPVLGLSVPA. A disulfide bridge links Cys94 with Cys122. Residues 137–155 form a helical membrane-spanning segment; it reads WSLIWLFILTLTLAVGLIR. At 156–161 the chain is on the cytoplasmic side; the sequence is REKNFR.

The protein belongs to the DsbB family.

The protein localises to the cell inner membrane. Functionally, required for disulfide bond formation in some periplasmic proteins. Acts by oxidizing the DsbA protein. This Cupriavidus necator (strain ATCC 17699 / DSM 428 / KCTC 22496 / NCIMB 10442 / H16 / Stanier 337) (Ralstonia eutropha) protein is Disulfide bond formation protein B.